A 412-amino-acid chain; its full sequence is MSGEIERSQEVAVIFAQDTDHKAQYEALAKLCNKYLPQNAMGRVDTAEIIKIIDTVIALETGSMVVSRQFVSLITERLDNQHLESECVKAISEGILAIIKTRTISYEDQVCILRLMLASLYEKEGRIKDAAQALIAINSDTSPKFNGPQAAKEGAKAQLCIRITKLLLDCSEIDEAEQYVNRTSILMVDLGANPDIQIEHKALQARVSDAKRRFVEAAQRYYELSATEQLPNSDKLTALGKAIVCVLLAKPGPQRSRLLTLIFKDERAPKCASFELIAKMYLTKVIHKDELEEFEHQLQDHQKADEHGESILKGVIQEHNITAISQLYINISFKTLGQLLGVDTEAAESMAGEMISSERLHGYIDQTNGILHFEDSNPMRVWDSQILSTLEQINKVSDMIVARHSEFAEFLT.

Residues 216-378 (EAAQRYYELS…GILHFEDSNP (163 aa)) enclose the PCI domain.

It belongs to the CSN4 family. As to quaternary structure, component of the CSN complex, probably composed of csn-1, csn-2, csn-3, csn-4, csn-5, csn-6 and csn-7. Within the complex it probably interacts directly with csn-2 and csn-4. In the complex, it probably interacts directly with csn-1, csn-2, csn-3 and csn-6. Interacts with itself.

It localises to the cytoplasm. The protein resides in the nucleus. Component of the COP9 signalosome complex (CSN), a complex involved in various cellular and developmental processes. The CSN complex is an essential regulator of the ubiquitin (Ubl) conjugation pathway by mediating the deneddylation of the cullin subunits of the SCF-type E3 ligase complexes, leading to decrease the Ubl ligase activity of SCF. The CSN complex plays an essential role in embryogenesis and oogenesis and is required to regulate microtubule stability in the early embryo. Mediates mei-3/katanin targeting for degradation at the meiosis to mitosis transition via deneddylation of cul-3. The protein is COP9 signalosome complex subunit 4 (csn-4) of Caenorhabditis elegans.